An 807-amino-acid polypeptide reads, in one-letter code: Putative transmembrane protein ORF807 (807 aa).

The next 5 helical transmembrane spans lie at 210–230, 234–254, 270–290, 459–479, and 657–677; these read VLMLICLLIYAGCYASYSDIL, GLSTVGAGVNAKVPVTAIVYF, VTIQLYALIWVGISTTNFVIL, ILIGVGAVALIVIGTVALVLT, and VALLSAIASILVNMFLFMPLV.

It is found in the host membrane. This chain is Putative transmembrane protein ORF807, found in Acidianus filamentous virus 1 (isolate United States/Yellowstone) (AFV-1).